A 360-amino-acid polypeptide reads, in one-letter code: Protein OSB4, chloroplastic (360 aa).

A chloroplast-targeting transit peptide spans 1–61 (MQFLGRSISK…AEKSSEEWPR (61 aa)). Positions 28 to 64 (SQQFLSTSSTESSSRTRGGGGGNRAEKSSEEWPRPME) are disordered. Low complexity predominate over residues 33–43 (STSSTESSSRT). Over residues 51–61 (RAEKSSEEWPR) the composition is skewed to basic and acidic residues. The region spanning 71–188 (IANSIDLIGY…VMVRDLHYIE (118 aa)) is the SSB domain. PDF region stretches follow at residues 224–276 (WFDL…SELK) and 296–344 (WKDL…EKLP).

The protein resides in the plastid. Its subcellular location is the chloroplast. Its function is as follows. Binds single-stranded DNA. The sequence is that of Protein OSB4, chloroplastic (OSB4) from Arabidopsis thaliana (Mouse-ear cress).